The primary structure comprises 299 residues: Virginiamycin B lyase (299 aa).

His-229 contributes to the substrate binding site. Mg(2+) is bound at residue Glu-269. His-271 functions as the Proton acceptor in the catalytic mechanism. Glu-286 provides a ligand contact to Mg(2+).

This sequence belongs to the Vgb family. Monomer. Requires Mg(2+) as cofactor.

Functionally, inactivates the type B streptogramin antibiotics by linearizing the lactone ring at the ester linkage, generating a free phenylglycine carboxylate and converting the threonyl moiety into 2-amino-butenoic acid. This chain is Virginiamycin B lyase (vgb), found in Bordetella pertussis (strain Tohama I / ATCC BAA-589 / NCTC 13251).